We begin with the raw amino-acid sequence, 593 residues long: Uroporphyrinogen-III C-methyltransferase (593 aa).

The interval 278–303 is disordered; sequence ETSSSPNKKTKQETVTEGVVPPTDEN.

The protein belongs to the precorrin methyltransferase family.

It carries out the reaction uroporphyrinogen III + 2 S-adenosyl-L-methionine = precorrin-2 + 2 S-adenosyl-L-homocysteine + H(+). Functionally, siroheme synthase involved in methionine biosynthesis. This chain is Uroporphyrinogen-III C-methyltransferase, found in Saccharomyces cerevisiae (strain ATCC 204508 / S288c) (Baker's yeast).